We begin with the raw amino-acid sequence, 584 residues long: Arginine--tRNA ligase (584 aa).

The short motif at 126 to 136 (PNIAKEMHVGH) is the 'HIGH' region element.

It belongs to the class-I aminoacyl-tRNA synthetase family. In terms of assembly, monomer.

It localises to the cytoplasm. The enzyme catalyses tRNA(Arg) + L-arginine + ATP = L-arginyl-tRNA(Arg) + AMP + diphosphate. This Synechococcus elongatus (strain ATCC 33912 / PCC 7942 / FACHB-805) (Anacystis nidulans R2) protein is Arginine--tRNA ligase.